We begin with the raw amino-acid sequence, 176 residues long: Ribosome rescue factor SmrB (176 aa).

The Smr domain maps to 98–173 (LDVHGLNQDQ…RSTAILFLIH (76 aa)).

The protein belongs to the SmrB family. In terms of assembly, associates with collided ribosomes, but not with correctly translating polysomes.

Functionally, acts as a ribosome collision sensor. Detects stalled/collided disomes (pairs of ribosomes where the leading ribosome is stalled and a second ribosome has collided with it) and endonucleolytically cleaves mRNA at the 5' boundary of the stalled ribosome. Stalled/collided disomes form a new interface (primarily via the 30S subunits) that binds SmrB. Cleaved mRNA becomes available for tmRNA ligation, leading to ribosomal subunit dissociation and rescue of stalled ribosomes. The sequence is that of Ribosome rescue factor SmrB from Buchnera aphidicola subsp. Baizongia pistaciae (strain Bp).